We begin with the raw amino-acid sequence, 198 residues long: Recombination protein RecR (198 aa).

The C4-type zinc-finger motif lies at 57 to 72 (CSICGNLTDDDPCHIC). In terms of domain architecture, Toprim spans 80-175 (TTILVVEDAK…KVTRLARGLA (96 aa)).

This sequence belongs to the RecR family.

May play a role in DNA repair. It seems to be involved in an RecBC-independent recombinational process of DNA repair. It may act with RecF and RecO. The chain is Recombination protein RecR from Streptococcus pyogenes serotype M1.